A 400-amino-acid chain; its full sequence is Phosphoglycerate kinase (400 aa).

Substrate-binding positions include 24 to 26, R40, 63 to 66, R121, and R154; these read DFN and HFGR. Residues K205, G296, E327, and 356 to 359 each bind ATP; that span reads GGDS.

In terms of assembly, monomer.

It is found in the cytoplasm. It catalyses the reaction (2R)-3-phosphoglycerate + ATP = (2R)-3-phospho-glyceroyl phosphate + ADP. It functions in the pathway carbohydrate degradation; glycolysis; pyruvate from D-glyceraldehyde 3-phosphate: step 2/5. The chain is Phosphoglycerate kinase from Nostoc sp. (strain PCC 7120 / SAG 25.82 / UTEX 2576).